Consider the following 1272-residue polypeptide: Presporeless protein A (1272 aa).

The short motif at 146 to 161 (KDKRIKPIDPKKKISR) is the Nuclear localization signal element. Disordered regions lie at residues 369–403 (ASTINDGEEEDDDDDDNDVDGNDDDNNKEKVDDTS) and 468–490 (STSSTNTASSTRSKASSNSNQLK). Residues 374 to 392 (DGEEEDDDDDDNDVDGNDD) are compositionally biased toward acidic residues. Residues 393 to 403 (DNNKEKVDDTS) are compositionally biased toward basic and acidic residues. The segment covering 468-487 (STSSTNTASSTRSKASSNSN) has biased composition (low complexity).

Its subcellular location is the nucleus. Functions autonomously, very early in the prespore pathway, to control prespore cell differentiation, maybe at the level of transcription. Also required for proper aggregation. The protein is Presporeless protein A (pslA) of Dictyostelium discoideum (Social amoeba).